The following is a 428-amino-acid chain: 3-phosphoshikimate 1-carboxyvinyltransferase (428 aa).

Residues Lys23, Ser24, and Arg28 each coordinate 3-phosphoshikimate. Lys23 serves as a coordination point for phosphoenolpyruvate. The phosphoenolpyruvate site is built by Gly97 and Arg125. 3-phosphoshikimate is bound by residues Ser170, Ser171, Gln172, Ser198, Asp314, Asn337, and Lys341. Residue Gln172 coordinates phosphoenolpyruvate. Asp314 (proton acceptor) is an active-site residue. The phosphoenolpyruvate site is built by Arg345, Arg387, and Lys412.

This sequence belongs to the EPSP synthase family. As to quaternary structure, monomer.

It is found in the cytoplasm. It catalyses the reaction 3-phosphoshikimate + phosphoenolpyruvate = 5-O-(1-carboxyvinyl)-3-phosphoshikimate + phosphate. The protein operates within metabolic intermediate biosynthesis; chorismate biosynthesis; chorismate from D-erythrose 4-phosphate and phosphoenolpyruvate: step 6/7. Functionally, catalyzes the transfer of the enolpyruvyl moiety of phosphoenolpyruvate (PEP) to the 5-hydroxyl of shikimate-3-phosphate (S3P) to produce enolpyruvyl shikimate-3-phosphate and inorganic phosphate. The protein is 3-phosphoshikimate 1-carboxyvinyltransferase of Yersinia pseudotuberculosis serotype IB (strain PB1/+).